Consider the following 368-residue polypeptide: S-adenosylmethionine:tRNA ribosyltransferase-isomerase (368 aa).

Belongs to the QueA family. As to quaternary structure, monomer.

It is found in the cytoplasm. It catalyses the reaction 7-aminomethyl-7-carbaguanosine(34) in tRNA + S-adenosyl-L-methionine = epoxyqueuosine(34) in tRNA + adenine + L-methionine + 2 H(+). Its pathway is tRNA modification; tRNA-queuosine biosynthesis. Functionally, transfers and isomerizes the ribose moiety from AdoMet to the 7-aminomethyl group of 7-deazaguanine (preQ1-tRNA) to give epoxyqueuosine (oQ-tRNA). This chain is S-adenosylmethionine:tRNA ribosyltransferase-isomerase, found in Methylorubrum extorquens (strain CM4 / NCIMB 13688) (Methylobacterium extorquens).